The sequence spans 113 residues: UPF0145 protein SynWH7803_1684 (113 aa).

The protein belongs to the UPF0145 family.

The polypeptide is UPF0145 protein SynWH7803_1684 (Synechococcus sp. (strain WH7803)).